Consider the following 187-residue polypeptide: Inner membrane-spanning protein YciB (187 aa).

5 helical membrane passes run 22 to 42, 50 to 70, 80 to 100, 118 to 138, and 148 to 168; these read IYVATGALIVATAVQLIVTYA, MQLITFVIVTIFGSMTIFFHD, IIYVVLAVGLTASHLMGKSVV, INWAWVGFFSFFAGLNIYIAY, and FKVFGMLIATFAYMIATGVYI.

This sequence belongs to the YciB family.

The protein localises to the cell inner membrane. Plays a role in cell envelope biogenesis, maintenance of cell envelope integrity and membrane homeostasis. The polypeptide is Inner membrane-spanning protein YciB (Vibrio parahaemolyticus serotype O3:K6 (strain RIMD 2210633)).